A 340-amino-acid chain; its full sequence is Guanine nucleotide-binding protein subunit beta-4 (340 aa).

S2 carries the N-acetylserine modification. At S2 the chain carries Phosphoserine. WD repeat units follow at residues 53-92, 95-134, 141-179, 182-221, and 224-263; these read GHLA…KMHA, LRSS…GNVR, GHTG…QTTT, GHSG…CRQS, and GHIS…ELLL. Phosphohistidine is present on H266. 2 WD repeats span residues 268–307 and 310–339; these read NIIC…RAGV and GHDN…LRIW.

The protein belongs to the WD repeat G protein beta family. In terms of assembly, g proteins are composed of 3 units, alpha, beta and gamma. Widely expressed in the brain. Highest levels found in the hippocampus and layers v and vi of the neocortex.

Its function is as follows. Guanine nucleotide-binding proteins (G proteins) are involved as a modulator or transducer in various transmembrane signaling systems. The beta and gamma chains are required for the GTPase activity, for replacement of GDP by GTP, and for G protein-effector interaction. The sequence is that of Guanine nucleotide-binding protein subunit beta-4 (Gnb4) from Rattus norvegicus (Rat).